A 196-amino-acid chain; its full sequence is MSSGNILWGSQNPIVFKNSFGVSNADTGSQDDLSQQNPFAEGYGVLLILLMVIQAIANNKFIEVQKNAERARNTQEKSNEMDEVIAKAAKGDAKTKEEVPEDVIKYMRDNGILIDGMTIDDYMAKYGDHGKLDKGGLQAIKAALDNDANRNTDLMSQGQITIQKMSQELNAVLTQLTGLISKWGEISSMIAQKTYS.

The protein belongs to the EspA/SseB family. In terms of assembly, may form a complex with SseC and SseD. Binds to the chaperone SseA.

It is found in the secreted. The protein localises to the cell surface. Effector proteins function to alter host cell physiology and promote bacterial survival in host tissues. May act as a translocator that mediates translocation of SPI-2 T3SS effector proteins from intraphagosomal bacterial cells into the host cells. SseB is required for correct localization of SseC and SseD on the bacterial cell surface. The polypeptide is Secreted effector protein SseB (sseB) (Salmonella typhimurium (strain LT2 / SGSC1412 / ATCC 700720)).